The following is a 564-amino-acid chain: Proline--tRNA ligase (564 aa).

Belongs to the class-II aminoacyl-tRNA synthetase family. ProS type 1 subfamily. Homodimer.

The protein resides in the cytoplasm. The catalysed reaction is tRNA(Pro) + L-proline + ATP = L-prolyl-tRNA(Pro) + AMP + diphosphate. Functionally, catalyzes the attachment of proline to tRNA(Pro) in a two-step reaction: proline is first activated by ATP to form Pro-AMP and then transferred to the acceptor end of tRNA(Pro). As ProRS can inadvertently accommodate and process non-cognate amino acids such as alanine and cysteine, to avoid such errors it has two additional distinct editing activities against alanine. One activity is designated as 'pretransfer' editing and involves the tRNA(Pro)-independent hydrolysis of activated Ala-AMP. The other activity is designated 'posttransfer' editing and involves deacylation of mischarged Ala-tRNA(Pro). The misacylated Cys-tRNA(Pro) is not edited by ProRS. The chain is Proline--tRNA ligase from Xanthomonas oryzae pv. oryzae (strain KACC10331 / KXO85).